Reading from the N-terminus, the 139-residue chain is 10 kDa chaperonin 2, chloroplastic (139 aa).

A chloroplast-targeting transit peptide spans 1-39; that stretch reads MASTFVCSLPNPFFAFPVKATTPSTANHTLLGSRRGCLR. The tract at residues 51 to 138 is cpn-10 domain; it reads KVVPQADRVL…CKESDLLALV (88 aa).

The protein belongs to the GroES chaperonin family. Expressed in leaves and stems. Expressed at low levels in germinating seeds, seedlings, rosettes leaves, flowers and siliques.

It localises to the plastid. Its subcellular location is the chloroplast stroma. Functions as a co-chaperone for protein folding in chloroplasts. This is 10 kDa chaperonin 2, chloroplastic from Arabidopsis thaliana (Mouse-ear cress).